The following is a 56-amino-acid chain: Large ribosomal subunit protein bL33 (56 aa).

Belongs to the bacterial ribosomal protein bL33 family.

The protein is Large ribosomal subunit protein bL33 of Aliarcobacter butzleri (strain RM4018) (Arcobacter butzleri).